The following is a 204-amino-acid chain: tRNA (pseudouridine(54)-N(1))-methyltransferase (204 aa).

S-adenosyl-L-methionine contacts are provided by L136 and G158.

It belongs to the methyltransferase superfamily. TrmY family. In terms of assembly, homodimer.

The protein localises to the cytoplasm. It catalyses the reaction pseudouridine(54) in tRNA + S-adenosyl-L-methionine = N(1)-methylpseudouridine(54) in tRNA + S-adenosyl-L-homocysteine + H(+). Its function is as follows. Specifically catalyzes the N1-methylation of pseudouridine at position 54 (Psi54) in tRNAs. In Pyrococcus abyssi (strain GE5 / Orsay), this protein is tRNA (pseudouridine(54)-N(1))-methyltransferase.